The chain runs to 232 residues: Thiamine import ATP-binding protein ThiQ (232 aa).

Residues 2–230 form the ABC transporter domain; sequence LKLTDITWLY…KASASALLGI (229 aa). Residue 32–39 participates in ATP binding; the sequence is GPSGAGKS.

Belongs to the ABC transporter superfamily. Thiamine importer (TC 3.A.1.19.1) family. As to quaternary structure, the complex is composed of two ATP-binding proteins (ThiQ), two transmembrane proteins (ThiP) and a solute-binding protein (ThiB).

Its subcellular location is the cell inner membrane. It catalyses the reaction thiamine(out) + ATP + H2O = thiamine(in) + ADP + phosphate + H(+). Part of the ABC transporter complex ThiBPQ involved in thiamine import. Responsible for energy coupling to the transport system. This Shigella sonnei (strain Ss046) protein is Thiamine import ATP-binding protein ThiQ.